The chain runs to 439 residues: Hydroxyornithine transacylase SID3 (439 aa).

The PTS1-type peroxisomal targeting signal motif lies at 437–439; that stretch reads SKL.

Belongs to the lysine N-acyltransferase mbtK family.

The protein resides in the peroxisome. The protein operates within siderophore biosynthesis. Hydroxyornithine transacylase; part of the gene cluster that mediates the biosynthesis of hydroxamate-containing siderophores that play a critical role in virulence via intracellular iron acquisition during macrophage infection. The chain is Hydroxyornithine transacylase SID3 from Ajellomyces capsulatus (Darling's disease fungus).